The sequence spans 96 residues: MPRLSVQEIDQALKGLRNWRFENGELVKEFKFADFDSSIRFLNMVQPVADSLDHHPDLCVYYNRVIVHLTTHDEGGVTDLDLKLAQKLDELEKMVH.

This sequence belongs to the pterin-4-alpha-carbinolamine dehydratase family.

The enzyme catalyses (4aS,6R)-4a-hydroxy-L-erythro-5,6,7,8-tetrahydrobiopterin = (6R)-L-erythro-6,7-dihydrobiopterin + H2O. This Metallosphaera sedula (strain ATCC 51363 / DSM 5348 / JCM 9185 / NBRC 15509 / TH2) protein is Putative pterin-4-alpha-carbinolamine dehydratase.